The sequence spans 271 residues: tRNA (guanine-N(1)-)-methyltransferase (271 aa).

Residues Gly-120 and 145–150 contribute to the S-adenosyl-L-methionine site; that span reads IGDYVL.

This sequence belongs to the RNA methyltransferase TrmD family. Homodimer.

The protein resides in the cytoplasm. It carries out the reaction guanosine(37) in tRNA + S-adenosyl-L-methionine = N(1)-methylguanosine(37) in tRNA + S-adenosyl-L-homocysteine + H(+). Its function is as follows. Specifically methylates guanosine-37 in various tRNAs. The sequence is that of tRNA (guanine-N(1)-)-methyltransferase from Bifidobacterium longum (strain NCC 2705).